Here is a 615-residue protein sequence, read N- to C-terminus: DNA mismatch repair protein MutL (615 aa).

The disordered stretch occupies residues 363-397; the sequence is FAEPAAREPVAPRYTPAPASGSRPAAPWPNAQPGY. Positions 364–391 are enriched in low complexity; sequence AEPAAREPVAPRYTPAPASGSRPAAPWP.

Belongs to the DNA mismatch repair MutL/HexB family.

In terms of biological role, this protein is involved in the repair of mismatches in DNA. It is required for dam-dependent methyl-directed DNA mismatch repair. May act as a 'molecular matchmaker', a protein that promotes the formation of a stable complex between two or more DNA-binding proteins in an ATP-dependent manner without itself being part of a final effector complex. The protein is DNA mismatch repair protein MutL of Shigella boydii serotype 18 (strain CDC 3083-94 / BS512).